Reading from the N-terminus, the 125-residue chain is Small ribosomal subunit protein uS13 (125 aa).

The disordered stretch occupies residues 95-125; the sequence is GLPLRGQRTKTNARTRKGKRKTVANKKIASK.

This sequence belongs to the universal ribosomal protein uS13 family. In terms of assembly, part of the 30S ribosomal subunit. Forms a loose heterodimer with protein S19. Forms two bridges to the 50S subunit in the 70S ribosome.

In terms of biological role, located at the top of the head of the 30S subunit, it contacts several helices of the 16S rRNA. In the 70S ribosome it contacts the 23S rRNA (bridge B1a) and protein L5 of the 50S subunit (bridge B1b), connecting the 2 subunits; these bridges are implicated in subunit movement. Contacts the tRNAs in the A and P-sites. This Borrelia garinii subsp. bavariensis (strain ATCC BAA-2496 / DSM 23469 / PBi) (Borreliella bavariensis) protein is Small ribosomal subunit protein uS13.